The chain runs to 481 residues: UDP-N-acetylmuramoyl-L-alanyl-D-glutamate--L-lysine ligase (481 aa).

Serine 42 is a binding site for UDP-N-acetyl-alpha-D-muramoyl-L-alanyl-D-glutamate. 118 to 124 (GTKGKTT) contacts ATP. UDP-N-acetyl-alpha-D-muramoyl-L-alanyl-D-glutamate is bound by residues 160-161 (TT), serine 187, and arginine 195. At lysine 229 the chain carries N6-carboxylysine. Residues 404-407 (DDPN) carry the L-lysine recognition motif motif.

The protein belongs to the MurCDEF family. MurE subfamily. Carboxylation is probably crucial for Mg(2+) binding and, consequently, for the gamma-phosphate positioning of ATP.

Its subcellular location is the cytoplasm. It carries out the reaction UDP-N-acetyl-alpha-D-muramoyl-L-alanyl-D-glutamate + L-lysine + ATP = UDP-N-acetyl-alpha-D-muramoyl-L-alanyl-gamma-D-glutamyl-L-lysine + ADP + phosphate + H(+). It functions in the pathway cell wall biogenesis; peptidoglycan biosynthesis. Functionally, catalyzes the addition of L-lysine to the nucleotide precursor UDP-N-acetylmuramoyl-L-alanyl-D-glutamate (UMAG) in the biosynthesis of bacterial cell-wall peptidoglycan. This Streptococcus pneumoniae (strain ATCC BAA-255 / R6) protein is UDP-N-acetylmuramoyl-L-alanyl-D-glutamate--L-lysine ligase.